Consider the following 350-residue polypeptide: Protein-glutamate methylesterase/protein-glutamine glutaminase 1 (350 aa).

One can recognise a Response regulatory domain in the interval 6-123; that stretch reads RVLVVDDSAL…GRSVENYAEE (118 aa). Asp-57 carries the 4-aspartylphosphate modification. The 192-residue stretch at 159-350 folds into the CheB-type methylesterase domain; the sequence is LGASGKIIFV…ARRVLGAVSA (192 aa). Active-site residues include Ser-171, His-197, and Asp-293.

It belongs to the CheB family. Post-translationally, phosphorylated by CheA. Phosphorylation of the N-terminal regulatory domain activates the methylesterase activity.

The protein localises to the cytoplasm. The enzyme catalyses [protein]-L-glutamate 5-O-methyl ester + H2O = L-glutamyl-[protein] + methanol + H(+). It catalyses the reaction L-glutaminyl-[protein] + H2O = L-glutamyl-[protein] + NH4(+). In terms of biological role, involved in chemotaxis. Part of a chemotaxis signal transduction system that modulates chemotaxis in response to various stimuli. Catalyzes the demethylation of specific methylglutamate residues introduced into the chemoreceptors (methyl-accepting chemotaxis proteins or MCP) by CheR. Also mediates the irreversible deamidation of specific glutamine residues to glutamic acid. The chain is Protein-glutamate methylesterase/protein-glutamine glutaminase 1 from Dechloromonas aromatica (strain RCB).